Here is a 199-residue protein sequence, read N- to C-terminus: Probable DNA-directed RNA polymerase subunit delta (199 aa).

The HTH HARE-type domain occupies 14–81 (LSLIEVAHAI…GDNMWGLRAW (68 aa)). 3 stretches are compositionally biased toward acidic residues: residues 116 to 147 (GDDDDVIDYDDDDPEDDDNYDDDDDQDDDTDD), 157 to 171 (AGVDDTDDDVADETL), and 182 to 199 (LNDDDDDDDYDDEDDESK). The segment at 116–199 (GDDDDVIDYD…DYDDEDDESK (84 aa)) is disordered.

This sequence belongs to the RpoE family. As to quaternary structure, RNAP is composed of a core of 2 alpha, a beta and a beta' subunits. The core is associated with a delta subunit and one of several sigma factors.

Its function is as follows. Participates in both the initiation and recycling phases of transcription. In the presence of the delta subunit, RNAP displays an increased specificity of transcription, a decreased affinity for nucleic acids, and an increased efficiency of RNA synthesis because of enhanced recycling. This Lactiplantibacillus plantarum (strain ATCC BAA-793 / NCIMB 8826 / WCFS1) (Lactobacillus plantarum) protein is Probable DNA-directed RNA polymerase subunit delta.